Reading from the N-terminus, the 415-residue chain is Dynein assembly factor with WD repeat domains 1 (415 aa).

WD repeat units lie at residues 90-129, 132-174, 175-214, 217-256, 259-298, 301-340, 343-384, and 386-415; these read AHIL…ELNT, GHRN…HTFR, GHTA…EVCT, GHSA…KVNI, GHCA…CVAT, GHDD…CIAK, GHEG…QVLE, and HTDE…RIWR.

This sequence belongs to the WD repeat WDR69 family. As to quaternary structure, interacts with IFT46.

It is found in the cytoplasm. The protein localises to the cytoskeleton. It localises to the flagellum basal body. The protein resides in the flagellum axoneme. In terms of biological role, required for axonemal dynein assembly and ciliary motility in ciliated organs, including Kupffer's vesicle, during embryogenesis. Facilitates the onset of robust cilia motility during development. This chain is Dynein assembly factor with WD repeat domains 1 (DAW1), found in Macaca fascicularis (Crab-eating macaque).